Reading from the N-terminus, the 299-residue chain is Biotin synthase (299 aa).

Residues 22–252 (TSNLKLDLCS…NVTIKIAAGR (231 aa)) form the Radical SAM core domain. The [4Fe-4S] cluster site is built by C40, C44, and C47. 3 residues coordinate [2Fe-2S] cluster: C116, C176, and K247.

Belongs to the radical SAM superfamily. Biotin synthase family. In terms of assembly, homodimer. [4Fe-4S] cluster serves as cofactor. [2Fe-2S] cluster is required as a cofactor.

It carries out the reaction (4R,5S)-dethiobiotin + (sulfur carrier)-SH + 2 reduced [2Fe-2S]-[ferredoxin] + 2 S-adenosyl-L-methionine = (sulfur carrier)-H + biotin + 2 5'-deoxyadenosine + 2 L-methionine + 2 oxidized [2Fe-2S]-[ferredoxin]. It functions in the pathway cofactor biosynthesis; biotin biosynthesis; biotin from 7,8-diaminononanoate: step 2/2. Its function is as follows. Catalyzes the conversion of dethiobiotin (DTB) to biotin by the insertion of a sulfur atom into dethiobiotin via a radical-based mechanism. The protein is Biotin synthase of Thermotoga petrophila (strain ATCC BAA-488 / DSM 13995 / JCM 10881 / RKU-1).